Reading from the N-terminus, the 394-residue chain is MAKEVFQRTKPHMNVGTIGHVDHGKTTLTAAISIYCSKVNKDAKALKYEDIDNAPEEKARGITINARHIEYETAGMHYAHVDCPGHADYIKNMITGAAQMDAAVLLVAADSGAEPQTKEHLLLAQRMGINKIIVFLNKLDLADPELVELVEVEVLELVEKYGFPGDTPIVKGSAFGAMSNPDDPEATKCIKELLETMDNYFDLPQRDIDKPFLLAVEDVFSISGRGTVATGRIERGVIKVGQEVEIVGIRETRKTTVTGVEMFQKILEQGQAGDNVGLLLRGVDKKDIERGQVIAAIGTITPHKKFKASIYCLTKEEGGRHKPFFSGYRPQFFFRTTDVTGMVSLEGKEMVMPGDNVDIVVELISSIAMDKNVEFAVREGGRTVASGRILEILE.

The tr-type G domain maps to 10-205; the sequence is KPHMNVGTIG…TMDNYFDLPQ (196 aa). Residues 19–26 form a G1 region; sequence GHVDHGKT. Residue 19 to 26 coordinates GTP; the sequence is GHVDHGKT. Mg(2+) is bound at residue Thr-26. The segment at 61-65 is G2; that stretch reads GITIN. Residues 82 to 85 are G3; that stretch reads DCPG. GTP-binding positions include 82 to 86 and 137 to 140; these read DCPGH and NKLD. A G4 region spans residues 137–140; that stretch reads NKLD. Residues 173 to 175 form a G5 region; sequence SAF.

This sequence belongs to the TRAFAC class translation factor GTPase superfamily. Classic translation factor GTPase family. EF-Tu/EF-1A subfamily. As to quaternary structure, monomer.

Its subcellular location is the cytoplasm. It carries out the reaction GTP + H2O = GDP + phosphate + H(+). GTP hydrolase that promotes the GTP-dependent binding of aminoacyl-tRNA to the A-site of ribosomes during protein biosynthesis. The polypeptide is Elongation factor Tu (Borrelia turicatae (strain 91E135)).